We begin with the raw amino-acid sequence, 493 residues long: tRNA (uracil-5-)-methyltransferase homolog B (493 aa).

Residues 1–14 constitute a mitochondrion transit peptide; it reads MHNPRLFLSRAGFF. S-adenosyl-L-methionine-binding residues include Q312, E362, and N412. C440 acts as the Nucleophile in catalysis. E486 functions as the Proton acceptor in the catalytic mechanism.

Belongs to the class I-like SAM-binding methyltransferase superfamily. RNA M5U methyltransferase family.

The protein resides in the mitochondrion matrix. The catalysed reaction is uridine(54) in tRNA + S-adenosyl-L-methionine = 5-methyluridine(54) in tRNA + S-adenosyl-L-homocysteine + H(+). It carries out the reaction a uridine in 12S rRNA + S-adenosyl-L-methionine = a 5-methyluridine in 12S rRNA + S-adenosyl-L-homocysteine + H(+). Functionally, mitochondrial S-adenosyl-L-methionine-dependent methyltransferase that catalyzes the formation of 5-methyl-uridine in tRNAs and 12S rRNA. Catalyzes the methylation of uridine at position 54 (m5U54) in all tRNAs. Specifically methylates the uridine in position 425 of 12S rRNA (m5U425). Does not affect RNA stability or mitochondrial translation. The protein is tRNA (uracil-5-)-methyltransferase homolog B of Mus musculus (Mouse).